Consider the following 103-residue polypeptide: UPF0145 protein BC_5181 (103 aa).

It belongs to the UPF0145 family.

This is UPF0145 protein BC_5181 from Bacillus cereus (strain ATCC 14579 / DSM 31 / CCUG 7414 / JCM 2152 / NBRC 15305 / NCIMB 9373 / NCTC 2599 / NRRL B-3711).